The following is an 84-amino-acid chain: Acetylcholine receptor subunit alpha (84 aa).

2 disulfides stabilise this stretch: cysteine 7-cysteine 21 and cysteine 71-cysteine 72. Asparagine 20 is a glycosylation site (N-linked (GlcNAc...) asparagine).

This sequence belongs to the ligand-gated ion channel (TC 1.A.9) family. Acetylcholine receptor (TC 1.A.9.1) subfamily. Alpha-1/CHRNA1 sub-subfamily. One of the alpha chains that assemble within the acetylcholine receptor, a pentamer of two alpha chains, a beta, a delta, and a gamma (in immature muscle) or epsilon (in mature muscle) chains. The muscle heteropentamer composed of alpha-1, beta-1, delta, epsilon subunits interacts with the alpha-conotoxin ImII.

Its subcellular location is the postsynaptic cell membrane. It is found in the cell membrane. The enzyme catalyses K(+)(in) = K(+)(out). The catalysed reaction is Na(+)(in) = Na(+)(out). Functionally, upon acetylcholine binding, the AChR responds by an extensive change in conformation that affects all subunits and leads to opening of an ion-conducting channel across the plasma membrane. This Crocidura russula (Greater white-toothed shrew) protein is Acetylcholine receptor subunit alpha (CHRNA1).